The chain runs to 812 residues: Endogenous retrovirus group K member 18 Pol protein (812 aa).

One can recognise a Reverse transcriptase domain in the interval Leu57–Ile245. Residues Leu161–Gly164 carry the LPQG motif. The YXDD motif lies at Tyr195–Asp198. Positions Leu460 to Ile590 constitute an RNase H type-1 domain. The Mg(2+) site is built by Asp469, Glu497, Asp517, and Asp582. The Integrase-type zinc-finger motif lies at Ser587–Gln628. The Zn(2+) site is built by His596, His600, Cys624, and Cys627. Positions Ala637 to Lys803 constitute an Integrase catalytic domain.

It belongs to the beta type-B retroviral polymerase family. HERV class-II K(HML-2) pol subfamily.

The enzyme catalyses DNA(n) + a 2'-deoxyribonucleoside 5'-triphosphate = DNA(n+1) + diphosphate. It carries out the reaction Endonucleolytic cleavage to 5'-phosphomonoester.. In terms of biological role, early post-infection, the reverse transcriptase converts the viral RNA genome into double-stranded viral DNA. The RNase H domain of the reverse transcriptase performs two functions. It degrades the RNA template and specifically removes the RNA primer from the RNA/DNA hybrid. Following nuclear import, the integrase catalyzes the insertion of the linear, double-stranded viral DNA into the host cell chromosome. Endogenous Pol proteins may have kept, lost or modified their original function during evolution. In Homo sapiens (Human), this protein is Endogenous retrovirus group K member 18 Pol protein (ERVK-18).